Consider the following 633-residue polypeptide: tRNA uridine 5-carboxymethylaminomethyl modification enzyme MnmG (633 aa).

FAD is bound by residues 15 to 20 (GAGHAG), Val127, and Ser182. 276–290 (GPRYCPSIEDKIVRF) is an NAD(+) binding site. Position 373 (Gln373) interacts with FAD.

This sequence belongs to the MnmG family. As to quaternary structure, homodimer. Heterotetramer of two MnmE and two MnmG subunits. Requires FAD as cofactor.

The protein resides in the cytoplasm. Functionally, NAD-binding protein involved in the addition of a carboxymethylaminomethyl (cmnm) group at the wobble position (U34) of certain tRNAs, forming tRNA-cmnm(5)s(2)U34. This is tRNA uridine 5-carboxymethylaminomethyl modification enzyme MnmG from Streptococcus thermophilus (strain ATCC BAA-491 / LMD-9).